Here is a 443-residue protein sequence, read N- to C-terminus: Probable cytosolic iron-sulfur protein assembly protein 1 (443 aa).

Disordered stretches follow at residues 1–27 and 95–124; these read MSDP…WQTA and REEQ…DDDE. A compositionally biased stretch (low complexity) spans 8 to 21; sequence TLSPLATLTPPSSS. 2 WD repeats span residues 14 to 57 and 61 to 103; these read TLTP…LLHS and GHKR…GNED. Residues 113-124 are compositionally biased toward acidic residues; sequence AEDEDGRDDDDE. WD repeat units follow at residues 135 to 174, 180 to 219, 221 to 248, 255 to 294, 323 to 362, and 391 to 440; these read GHES…NFET, EHDG…WVQV, CIAG…KDFR, SEEQ…RAEN, VHER…QTPN, and AHSV…DPPQ.

The protein belongs to the WD repeat CIA1 family.

In terms of biological role, essential component of the cytosolic iron-sulfur (Fe/S) protein assembly machinery. Required for the maturation of extramitochondrial Fe/S proteins. The protein is Probable cytosolic iron-sulfur protein assembly protein 1 of Phaeosphaeria nodorum (strain SN15 / ATCC MYA-4574 / FGSC 10173) (Glume blotch fungus).